The primary structure comprises 239 residues: Uridylate kinase (239 aa).

13 to 16 (KISG) is an ATP binding site. Gly-55 lines the UMP pocket. Positions 56 and 60 each coordinate ATP. UMP contacts are provided by residues Asp-75 and 136–143 (LGIPFFTT). 3 residues coordinate ATP: Thr-163, Tyr-169, and Asp-172.

The protein belongs to the UMP kinase family. Homohexamer.

The protein localises to the cytoplasm. The catalysed reaction is UMP + ATP = UDP + ADP. It participates in pyrimidine metabolism; CTP biosynthesis via de novo pathway; UDP from UMP (UMPK route): step 1/1. With respect to regulation, inhibited by UTP. Functionally, catalyzes the reversible phosphorylation of UMP to UDP. This is Uridylate kinase from Buchnera aphidicola subsp. Cinara cedri (strain Cc).